Consider the following 419-residue polypeptide: Histidine--tRNA ligase (419 aa).

It belongs to the class-II aminoacyl-tRNA synthetase family. In terms of assembly, homodimer.

Its subcellular location is the cytoplasm. The enzyme catalyses tRNA(His) + L-histidine + ATP = L-histidyl-tRNA(His) + AMP + diphosphate + H(+). This chain is Histidine--tRNA ligase, found in Thermosipho melanesiensis (strain DSM 12029 / CIP 104789 / BI429).